The chain runs to 403 residues: Cysteine desulfurase IscS (403 aa).

Pyridoxal 5'-phosphate is bound by residues Ala-75–Thr-76, Asn-155, Gln-183, and Ser-203–His-205. Lys-206 bears the N6-(pyridoxal phosphate)lysine mark. Thr-243 serves as a coordination point for pyridoxal 5'-phosphate. Cys-328 serves as the catalytic Cysteine persulfide intermediate. A [2Fe-2S] cluster-binding site is contributed by Cys-328.

It belongs to the class-V pyridoxal-phosphate-dependent aminotransferase family. NifS/IscS subfamily. Homodimer. Forms a heterotetramer with IscU, interacts with other sulfur acceptors. The cofactor is pyridoxal 5'-phosphate.

Its subcellular location is the cytoplasm. The enzyme catalyses (sulfur carrier)-H + L-cysteine = (sulfur carrier)-SH + L-alanine. Its pathway is cofactor biosynthesis; iron-sulfur cluster biosynthesis. Master enzyme that delivers sulfur to a number of partners involved in Fe-S cluster assembly, tRNA modification or cofactor biosynthesis. Catalyzes the removal of elemental sulfur atoms from cysteine to produce alanine. Functions as a sulfur delivery protein for Fe-S cluster synthesis onto IscU, an Fe-S scaffold assembly protein, as well as other S acceptor proteins. This chain is Cysteine desulfurase IscS, found in Psychromonas ingrahamii (strain DSM 17664 / CCUG 51855 / 37).